Reading from the N-terminus, the 151-residue chain is MDYGTILEERTNPAVLMNAREQYMRQCARGDPSAASTFAFAHAMIGSKNKLDVKEGIVCLEKLLRDDEDRTSKRNYVYYLAVAHARIKQYDLALGYIDVLLDAEGDNQQAKTLKESIKSAMTHDGLIGAAIVGGGALALAGLVAIFSMSRK.

A helical membrane pass occupies residues 126 to 146 (LIGAAIVGGGALALAGLVAIF).

Belongs to the FIS1 family.

The protein localises to the mitochondrion outer membrane. It is found in the peroxisome membrane. Its subcellular location is the mitochondrion. Involved in the fragmentation of the mitochondrial network. Involved in perinuclear clustering of the mitochondrial network. May act, redundantly with fis-1, downstream of mitochondrial fission, before the fission products participate in mitochondrial homeostasis, mitophagy, or apoptosis. Plays a role in apoptosis by promoting mitochondrial elimination and cell-death execution, acting downstream of caspase ced-3, and perhaps independently of dynamin GTPase drp-1, caspase ced-9 and apoptosis-inducing factor AIFM/wah-1. The protein is FIS1-related protein fis-2 of Caenorhabditis elegans.